The following is a 367-amino-acid chain: Anthranilate phosphoribosyltransferase (367 aa).

Over residues 1–17 (MVLSSEASSAADHSAAA) the composition is skewed to low complexity. A disordered region spans residues 1–22 (MVLSSEASSAADHSAAAPIPTS). 5-phospho-alpha-D-ribose 1-diphosphate is bound by residues glycine 104, 107 to 108 (GD), threonine 112, 114 to 117 (NLST), 132 to 140 (KHGNRAASS), and glycine 144. Glycine 104 contributes to the anthranilate binding site. Mg(2+) is bound at residue serine 116. Asparagine 135 lines the anthranilate pocket. Residue arginine 190 participates in anthranilate binding. Mg(2+) contacts are provided by aspartate 248 and glutamate 249.

Belongs to the anthranilate phosphoribosyltransferase family. As to quaternary structure, homodimer. Mg(2+) serves as cofactor.

It carries out the reaction N-(5-phospho-beta-D-ribosyl)anthranilate + diphosphate = 5-phospho-alpha-D-ribose 1-diphosphate + anthranilate. Its pathway is amino-acid biosynthesis; L-tryptophan biosynthesis; L-tryptophan from chorismate: step 2/5. In terms of biological role, catalyzes the transfer of the phosphoribosyl group of 5-phosphorylribose-1-pyrophosphate (PRPP) to anthranilate to yield N-(5'-phosphoribosyl)-anthranilate (PRA). This is Anthranilate phosphoribosyltransferase from Mycobacterium marinum (strain ATCC BAA-535 / M).